The following is a 386-amino-acid chain: Succinate--CoA ligase [ADP-forming] subunit beta (386 aa).

Positions 9–244 constitute an ATP-grasp domain; that stretch reads KDLLTAYQLP…PSQENIRDVL (236 aa). ATP contacts are provided by residues Lys-46, 53–55, Val-102, and Glu-107; that span reads GRG. Mg(2+) contacts are provided by Asn-199 and Asp-213. Substrate contacts are provided by residues Asn-264 and 321–323; that span reads GIM.

The protein belongs to the succinate/malate CoA ligase beta subunit family. In terms of assembly, heterotetramer of two alpha and two beta subunits. Mg(2+) serves as cofactor.

The catalysed reaction is succinate + ATP + CoA = succinyl-CoA + ADP + phosphate. The enzyme catalyses GTP + succinate + CoA = succinyl-CoA + GDP + phosphate. It functions in the pathway carbohydrate metabolism; tricarboxylic acid cycle; succinate from succinyl-CoA (ligase route): step 1/1. Functionally, succinyl-CoA synthetase functions in the citric acid cycle (TCA), coupling the hydrolysis of succinyl-CoA to the synthesis of either ATP or GTP and thus represents the only step of substrate-level phosphorylation in the TCA. The beta subunit provides nucleotide specificity of the enzyme and binds the substrate succinate, while the binding sites for coenzyme A and phosphate are found in the alpha subunit. The sequence is that of Succinate--CoA ligase [ADP-forming] subunit beta from Chlamydia trachomatis serovar A (strain ATCC VR-571B / DSM 19440 / HAR-13).